Consider the following 500-residue polypeptide: Adenylosuccinate synthetase, chloroplastic (500 aa).

GTP-binding positions include 87 to 93 (GDEGKGK) and 115 to 117 (GHT). D88 (proton acceptor) is an active-site residue. Residues D88 and G115 each contribute to the Mg(2+) site. Residues 88-91 (DEGK), 113-116 (NAGH), T205, R219, Q299, T314, and R378 each bind IMP. H116 (proton donor) is an active-site residue. Residue 374–380 (TTTGRPR) participates in substrate binding. Residues R380, 406-408 (KLD), and 489-491 (GIG) contribute to the GTP site.

Belongs to the adenylosuccinate synthetase family. Homodimer. The cofactor is Mg(2+).

It is found in the plastid. The protein resides in the chloroplast. It catalyses the reaction IMP + L-aspartate + GTP = N(6)-(1,2-dicarboxyethyl)-AMP + GDP + phosphate + 2 H(+). Its pathway is purine metabolism; AMP biosynthesis via de novo pathway; AMP from IMP: step 1/2. Plays an important role in the de novo pathway and in the salvage pathway of purine nucleotide biosynthesis. Catalyzes the first committed step in the biosynthesis of AMP from IMP. This chain is Adenylosuccinate synthetase, chloroplastic, found in Solanum bulbocastanum (Wild potato).